Reading from the N-terminus, the 1187-residue chain is DNA-directed RNA polymerase subunit beta (1187 aa).

Residues 1150 to 1187 (KDEDDDPASSADDLGFNIGARPDAAAKEDQKAEEPEYQ) are disordered. Residues 1173-1187 (AAAKEDQKAEEPEYQ) show a composition bias toward basic and acidic residues.

This sequence belongs to the RNA polymerase beta chain family. The RNAP catalytic core consists of 2 alpha, 1 beta, 1 beta' and 1 omega subunit. When a sigma factor is associated with the core the holoenzyme is formed, which can initiate transcription.

The enzyme catalyses RNA(n) + a ribonucleoside 5'-triphosphate = RNA(n+1) + diphosphate. DNA-dependent RNA polymerase catalyzes the transcription of DNA into RNA using the four ribonucleoside triphosphates as substrates. The sequence is that of DNA-directed RNA polymerase subunit beta from Bifidobacterium longum (strain NCC 2705).